The following is a 449-amino-acid chain: Na(+)/H(+) antiporter NhaA 1 (449 aa).

A run of 11 helical transmembrane segments spans residues 32-52, 87-107, 114-134, 145-165, 174-194, 202-222, 233-253, 318-338, 347-367, 382-402, and 417-437; these read IEAT…TLSN, GLMT…VVLG, MVAF…GLYL, GWGV…ALLG, VFLL…VAVG, TALA…LLGV, AIIW…GVIL, WVAF…SITI, LAVM…FAWL, WGGL…ALFI, and LGIL…LCMF.

The protein belongs to the NhaA Na(+)/H(+) (TC 2.A.33) antiporter family.

It localises to the cell inner membrane. It carries out the reaction Na(+)(in) + 2 H(+)(out) = Na(+)(out) + 2 H(+)(in). Its function is as follows. Na(+)/H(+) antiporter that extrudes sodium in exchange for external protons. The sequence is that of Na(+)/H(+) antiporter NhaA 1 from Acidiphilium cryptum (strain JF-5).